The primary structure comprises 255 residues: Indole-3-glycerol phosphate synthase (255 aa).

Belongs to the TrpC family.

The catalysed reaction is 1-(2-carboxyphenylamino)-1-deoxy-D-ribulose 5-phosphate + H(+) = (1S,2R)-1-C-(indol-3-yl)glycerol 3-phosphate + CO2 + H2O. The protein operates within amino-acid biosynthesis; L-tryptophan biosynthesis; L-tryptophan from chorismate: step 4/5. The polypeptide is Indole-3-glycerol phosphate synthase (Streptococcus pneumoniae (strain Taiwan19F-14)).